Reading from the N-terminus, the 409-residue chain is MSTVREEQLNLEIPASDVGSRWQKLINWFQPKASQPLYDRMLFTLAMALLAFGFVMVTSASLPTADRLTGNPFHFAIRHGIYILISLAVMLATLRVPANSWNQQSGKLLLLGLIMLLMVLVVGYEVNGAQRWIKVGPITFQAAEVAKLFFCIYMASYLSRREDEVREATKGFIKPLALLFIAAVLLLMQPDFGTVVVLSATTVAMLFLAGARLWQFFAVFITCVLALILLIIVEPYRMQRLLTFLEPEKDPFGAGYQLMQSLIAFGQGHFSGAGLGNSIQKLQYLPEAHTDFIMAVVAEELGFLGVLAVIATVLMLVWRALIIGRRCLMQEQRYGGYLAYGIGIWFSIQAFVNIGVASGALPTKGLTLPLVSYGGNSLIISALAVGLLLRIDHERRMLGRKVAPRGGAE.

A run of 9 helical transmembrane segments spans residues 42-62 (LFTLAMALLAFGFVMVTSASL), 72-92 (PFHFAIRHGIYILISLAVMLA), 108-128 (LLLLGLIMLLMVLVVGYEVNG), 135-155 (VGPITFQAAEVAKLFFCIYMA), 178-198 (LLFIAAVLLLMQPDFGTVVVL), 213-233 (LWQFFAVFITCVLALILLIIV), 303-323 (FLGVLAVIATVLMLVWRALII), 337-357 (YLAYGIGIWFSIQAFVNIGVA), and 368-388 (LPLVSYGGNSLIISALAVGLL).

The protein belongs to the SEDS family. FtsW subfamily.

The protein localises to the cell inner membrane. The enzyme catalyses [GlcNAc-(1-&gt;4)-Mur2Ac(oyl-L-Ala-gamma-D-Glu-L-Lys-D-Ala-D-Ala)](n)-di-trans,octa-cis-undecaprenyl diphosphate + beta-D-GlcNAc-(1-&gt;4)-Mur2Ac(oyl-L-Ala-gamma-D-Glu-L-Lys-D-Ala-D-Ala)-di-trans,octa-cis-undecaprenyl diphosphate = [GlcNAc-(1-&gt;4)-Mur2Ac(oyl-L-Ala-gamma-D-Glu-L-Lys-D-Ala-D-Ala)](n+1)-di-trans,octa-cis-undecaprenyl diphosphate + di-trans,octa-cis-undecaprenyl diphosphate + H(+). It participates in cell wall biogenesis; peptidoglycan biosynthesis. Peptidoglycan polymerase that is essential for cell division. The protein is Probable peptidoglycan glycosyltransferase FtsW of Idiomarina loihiensis (strain ATCC BAA-735 / DSM 15497 / L2-TR).